Reading from the N-terminus, the 279-residue chain is Probable endonuclease 4 (279 aa).

Residues His69, His109, Glu145, Asp179, His182, His216, Asp229, His231, and Glu261 each contribute to the Zn(2+) site.

It belongs to the AP endonuclease 2 family. The cofactor is Zn(2+).

The enzyme catalyses Endonucleolytic cleavage to 5'-phosphooligonucleotide end-products.. Its function is as follows. Endonuclease IV plays a role in DNA repair. It cleaves phosphodiester bonds at apurinic or apyrimidinic (AP) sites, generating a 3'-hydroxyl group and a 5'-terminal sugar phosphate. This chain is Probable endonuclease 4, found in Buchnera aphidicola subsp. Schizaphis graminum (strain Sg).